A 126-amino-acid chain; its full sequence is UPF0102 protein MXAN_3551 (126 aa).

It belongs to the UPF0102 family.

The sequence is that of UPF0102 protein MXAN_3551 from Myxococcus xanthus (strain DK1622).